We begin with the raw amino-acid sequence, 352 residues long: Threonine synthase (352 aa).

Lys59 is modified (N6-(pyridoxal phosphate)lysine). Pyridoxal 5'-phosphate is bound by residues Asn85, 185–189 (GNAGN), and Thr314.

Belongs to the threonine synthase family. Pyridoxal 5'-phosphate is required as a cofactor.

It catalyses the reaction O-phospho-L-homoserine + H2O = L-threonine + phosphate. Its pathway is amino-acid biosynthesis; L-threonine biosynthesis; L-threonine from L-aspartate: step 5/5. Catalyzes the gamma-elimination of phosphate from L-phosphohomoserine and the beta-addition of water to produce L-threonine. In Bacillus subtilis (strain 168), this protein is Threonine synthase (thrC).